Here is a 490-residue protein sequence, read N- to C-terminus: Aspartyl/glutamyl-tRNA(Asn/Gln) amidotransferase subunit B (490 aa).

This sequence belongs to the GatB/GatE family. GatB subfamily. In terms of assembly, heterotrimer of A, B and C subunits.

The enzyme catalyses L-glutamyl-tRNA(Gln) + L-glutamine + ATP + H2O = L-glutaminyl-tRNA(Gln) + L-glutamate + ADP + phosphate + H(+). It carries out the reaction L-aspartyl-tRNA(Asn) + L-glutamine + ATP + H2O = L-asparaginyl-tRNA(Asn) + L-glutamate + ADP + phosphate + 2 H(+). Functionally, allows the formation of correctly charged Asn-tRNA(Asn) or Gln-tRNA(Gln) through the transamidation of misacylated Asp-tRNA(Asn) or Glu-tRNA(Gln) in organisms which lack either or both of asparaginyl-tRNA or glutaminyl-tRNA synthetases. The reaction takes place in the presence of glutamine and ATP through an activated phospho-Asp-tRNA(Asn) or phospho-Glu-tRNA(Gln). This is Aspartyl/glutamyl-tRNA(Asn/Gln) amidotransferase subunit B from Prochlorococcus marinus (strain MIT 9312).